Here is a 78-residue protein sequence, read N- to C-terminus: MRLLALSGLLCMLLLCFCIFSSEGRRHPAKSLKLRRCCHLSPRSKLTTWKGNHTRPCRLCRNKLPVKSWVVPGALPQI.

Positions 1-24 (MRLLALSGLLCMLLLCFCIFSSEG) are cleaved as a signal peptide. 2 disulfides stabilise this stretch: Cys37-Cys60 and Cys38-Cys57.

As to quaternary structure, interacts with SUSD2; the interaction is direct. Highly abundant in the testis, colon, eye, and tongue. Detected in the epithelial layer of the colon, but not the small intestine.

It localises to the secreted. Functionally, highly cationic protein that has multiple functions. Acts as a chemotactic factor that mediates lymphocytes recruitment to epithelia through binding and activation of the G-protein coupled receptor GPR15. May be a tumor suppressor; together with SUSD2 has a growth inhibitory effect on colon cancer cells which includes G1 cell cycle arrest. May regulate keratinocyte proliferation. In addition, through activation of Mas-related G protein-coupled receptors (MRGPRs) contributes to pruritogenesis by activating itch-selective sensory neurons and mast cells degranulation. Has antimicrobial activity against Gram-positive bacteria, including Staphylococcus aureus and Actinomyces spec., and Mycoplasma hominis and lentivirus. The sequence is that of Protein GPR15LG (Gpr15lg) from Mus musculus (Mouse).